Consider the following 295-residue polypeptide: Probable lipid kinase YegS-like (295 aa).

Residues 1-129 (MQGRKAMLVL…IDLGQAGDQL (129 aa)) form the DAGKc domain. ATP is bound by residues Thr39, 65–71 (GDGTLRD), and Thr92. Residues Met210, Asp213, and Leu215 each coordinate Mg(2+). The active-site Proton acceptor is the Glu264.

This sequence belongs to the diacylglycerol/lipid kinase family. YegS lipid kinase subfamily. The cofactor is Mg(2+). It depends on Ca(2+) as a cofactor.

It localises to the cytoplasm. Its function is as follows. Probably phosphorylates lipids; the in vivo substrate is unknown. This chain is Probable lipid kinase YegS-like, found in Pseudomonas putida (strain ATCC 47054 / DSM 6125 / CFBP 8728 / NCIMB 11950 / KT2440).